An 89-amino-acid chain; its full sequence is Small ribosomal subunit protein uS15 (89 aa).

This sequence belongs to the universal ribosomal protein uS15 family. As to quaternary structure, part of the 30S ribosomal subunit. Forms a bridge to the 50S subunit in the 70S ribosome, contacting the 23S rRNA.

Its function is as follows. One of the primary rRNA binding proteins, it binds directly to 16S rRNA where it helps nucleate assembly of the platform of the 30S subunit by binding and bridging several RNA helices of the 16S rRNA. Forms an intersubunit bridge (bridge B4) with the 23S rRNA of the 50S subunit in the ribosome. The polypeptide is Small ribosomal subunit protein uS15 (Mycolicibacterium vanbaalenii (strain DSM 7251 / JCM 13017 / BCRC 16820 / KCTC 9966 / NRRL B-24157 / PYR-1) (Mycobacterium vanbaalenii)).